The primary structure comprises 413 residues: Alpha-ketoglutarate-dependent xanthine dioxygenase xan1 (413 aa).

Low complexity predominate over residues 1 to 18 (MSATATTTVVEPPTTTLT). Positions 1–24 (MSATATTTVVEPPTTTLTGATEPP) are disordered. Fe cation-binding residues include His183 and Asp185. 2-oxoglutarate-binding residues include Thr228 and Trp362. His377 provides a ligand contact to Fe cation. Arg389 contacts 2-oxoglutarate.

This sequence belongs to the TfdA dioxygenase family. Fe(2+) is required as a cofactor.

The protein localises to the cytoplasm. Its subcellular location is the cytosol. The catalysed reaction is xanthine + 2-oxoglutarate + O2 = urate + succinate + CO2. Alpha-ketoglutarate-dependent xanthine dioxygenase is a non-heme mononuclear Fe(2+) enzyme that decarboxylates alpha-ketoglutarate to succinate and CO(2) while hydroxylating xanthine to generate uric acid. Allows xanthine utilization as a nitrogen source. This is Alpha-ketoglutarate-dependent xanthine dioxygenase xan1 (xan1) from Schizosaccharomyces pombe (strain 972 / ATCC 24843) (Fission yeast).